Here is a 130-residue protein sequence, read N- to C-terminus: MARTAATKLALVPLVAAMLLVAADAHHLRPGELCLGPLRRLRKRQRHQPSAGCCSGVKRLAGLARSTADKQATCRCLKSVPARTTPAGPQASPPGAASASPTRSAPVSTALRSTDRTRAPHISSDRRLVG.

A signal peptide spans 1 to 25; the sequence is MARTAATKLALVPLVAAMLLVAADA. The interval 80–130 is disordered; the sequence is VPARTTPAGPQASPPGAASASPTRSAPVSTALRSTDRTRAPHISSDRRLVG. Positions 84-110 are enriched in low complexity; that stretch reads TTPAGPQASPPGAASASPTRSAPVSTA. Over residues 113 to 130 the composition is skewed to basic and acidic residues; sequence STDRTRAPHISSDRRLVG.

Belongs to the plant LTP family. As to expression, shoot meristem.

Possible dehydrative stress responsive protein. Not shown to have lipid transfer activity. This is Protein BLT4 (BLT4) from Hordeum vulgare (Barley).